The primary structure comprises 163 residues: Phosphopantetheine adenylyltransferase (163 aa).

Position 9 (Thr9) interacts with substrate. Residues 9–10 and His17 each bind ATP; that span reads TF. The substrate site is built by Lys41, Thr73, and Arg87. Residues 88 to 90, Glu98, and 123 to 129 contribute to the ATP site; these read GLR and FSFISSS.

The protein belongs to the bacterial CoaD family. As to quaternary structure, homohexamer. It depends on Mg(2+) as a cofactor.

It localises to the cytoplasm. It carries out the reaction (R)-4'-phosphopantetheine + ATP + H(+) = 3'-dephospho-CoA + diphosphate. It participates in cofactor biosynthesis; coenzyme A biosynthesis; CoA from (R)-pantothenate: step 4/5. Its function is as follows. Reversibly transfers an adenylyl group from ATP to 4'-phosphopantetheine, yielding dephospho-CoA (dPCoA) and pyrophosphate. The protein is Phosphopantetheine adenylyltransferase of Desulfitobacterium hafniense (strain DSM 10664 / DCB-2).